Consider the following 194-residue polypeptide: Peptidyl-tRNA hydrolase (194 aa).

Tyr-16 serves as a coordination point for tRNA. His-21 (proton acceptor) is an active-site residue. Positions 66, 68, and 114 each coordinate tRNA.

The protein belongs to the PTH family. In terms of assembly, monomer.

It is found in the cytoplasm. The catalysed reaction is an N-acyl-L-alpha-aminoacyl-tRNA + H2O = an N-acyl-L-amino acid + a tRNA + H(+). Functionally, hydrolyzes ribosome-free peptidyl-tRNAs (with 1 or more amino acids incorporated), which drop off the ribosome during protein synthesis, or as a result of ribosome stalling. Its function is as follows. Catalyzes the release of premature peptidyl moieties from peptidyl-tRNA molecules trapped in stalled 50S ribosomal subunits, and thus maintains levels of free tRNAs and 50S ribosomes. In Geobacter metallireducens (strain ATCC 53774 / DSM 7210 / GS-15), this protein is Peptidyl-tRNA hydrolase.